A 337-amino-acid chain; its full sequence is DNA-directed RNA polymerase subunit alpha (337 aa).

The alpha N-terminal domain (alpha-NTD) stretch occupies residues 1–231 (MRNITISAYT…KQLSVFDKIT (231 aa)). Positions 248-337 (NTKLLQNITD…IAELKAQNEG (90 aa)) are alpha C-terminal domain (alpha-CTD).

The protein belongs to the RNA polymerase alpha chain family. Homodimer. The RNAP catalytic core consists of 2 alpha, 1 beta, 1 beta' and 1 omega subunit. When a sigma factor is associated with the core the holoenzyme is formed, which can initiate transcription.

It catalyses the reaction RNA(n) + a ribonucleoside 5'-triphosphate = RNA(n+1) + diphosphate. DNA-dependent RNA polymerase catalyzes the transcription of DNA into RNA using the four ribonucleoside triphosphates as substrates. The protein is DNA-directed RNA polymerase subunit alpha of Campylobacter jejuni subsp. doylei (strain ATCC BAA-1458 / RM4099 / 269.97).